A 167-amino-acid chain; its full sequence is Iron-sulfur cluster assembly enzyme ISCU (167 aa).

The transit peptide at M1–L34 directs the protein to the mitochondrion. The residue at position 14 (S14) is a Phosphoserine; by MTOR. Zn(2+) is bound at residue P46. The active-site Cysteine persulfide intermediate is C69. Cysteine persulfide is present on C69. 5 residues coordinate Zn(2+): G70, D71, C95, K112, and C138. The active-site Cysteine persulfide intermediate is the C138. C138 bears the Cysteine persulfide mark.

It belongs to the NifU family. As to quaternary structure, homodimer; Tyr-35-mediated dimerization of two iron- and sulfide-containing ISCU subunit bind to the cysteine desulfurase complex. Component of the mitochondrial core iron-sulfur cluster (ISC) complex composed of NFS1, LYRM4, NDUFAB1, ISCU, FXN, and FDX2; this complex is an heterohexamer containing two copies of each monomer. Interacts (D-state) with NFS1 (homodimer form); each monomer interacts with the C-terminal regions of each NFS1 monomer. Interacts (monomer form) with FXN (via ferrous form); the interaction is possible when both are bound to the dimeric form of the cysteine desulfurase complex (NFS1:LYRM4) and enhances FXN interaction to the dimeric form of the cysteine desulfurase complex (NFS1:LYRM4). Interacts with GLRX5. Interacts (D-state) with HSPA9. Interacts (S-state) with HSCB; this interaction stimulates the ATPase activity of HSPA9. In terms of assembly, component of the cytoplasmic core iron-sulfur cluster (ISC) complex composed at least of NFS1, LYRM4, and ISCU; this complex interacts with FXN. Monomer; each monomer binds to the C-terminal regions of NFS1 (cytoplasmic and homodimer form). Interacts with NFS1 (cytoplasmic and homodimer form); this interaction promotes de novo iron-sulfur cluster formation. Interacts with HSCB (cytoplasmic form); this interaction stabilizes the (Fe-S) clusters on ISCU. Post-translationally, phosphorylation at Ser-14 is required for ISCU protein stabilization in the cytosol, whereas dephosphorylation of Ser-14, due to the inhibition of mTORC1 (mammalian target of rapamycin complex 1) complex, leads to degradation of the precursor form and ultimately to a decrease in the mitochondrial mature form. Cysteine persulfide is reduced by thiol-containing molecules such as glutathione and L-cysteine. Detected in heart, liver, skeletal muscle, brain, pancreas, kidney, lung and placenta.

It is found in the mitochondrion. The protein resides in the cytoplasm. It localises to the nucleus. Mitochondrial scaffold protein, of the core iron-sulfur cluster (ISC) assembly complex, that provides the structural architecture on which the [2Fe-2S] clusters are assembled. The core iron-sulfur cluster (ISC) assembly complex is involved in the de novo synthesis of a [2Fe-2S] cluster, the first step of the mitochondrial iron-sulfur protein biogenesis. This process is initiated by the cysteine desulfurase complex (NFS1:LYRM4:NDUFAB1) that produces persulfide which is delivered on the scaffold protein ISCU in a FXN-dependent manner. Then this complex is stabilized by FDX2 which provides reducing equivalents to accomplish the [2Fe-2S] cluster assembly. Finally, the [2Fe-2S] cluster is transferred from ISCU to chaperone proteins, including HSCB, HSPA9 and GLRX5. Exists as two slow interchanging conformational states, a structured (S) and disordered (D) form. May modulate NFS1 desulfurase activity in a zinc-dependent manner. Modulates the interaction between FXN and the cysteine desulfurase complex. Its function is as follows. Cytoplasmic scaffold protein, of the cytoplasmic core iron-sulfur cluster (ISC) assembly complex that provides the structural architecture on which the Fe-S clusters are assembled and may be involved in the cytoplasmic iron-sulfur protein biogenesis. In Homo sapiens (Human), this protein is Iron-sulfur cluster assembly enzyme ISCU.